The sequence spans 422 residues: Cotranscriptional regulator ARB2A homolog (422 aa).

The first 19 residues, 1–19 (MKLEIKCFIICKVLPLVWL), serve as a signal peptide directing secretion. A disordered region spans residues 213 to 253 (KSKVPADQPSPDSSDEPAEKRERRERNPKETKKRRDFYEKY). Positions 229–242 (PAEKRERRERNPKE) are enriched in basic and acidic residues. The active-site Nucleophile is the Ser299. The tract at residues 403 to 422 (NTKTKPTPTRRSNRIKHEDL) is disordered.

The protein belongs to the ARB2A family.

The protein resides in the nucleus. It localises to the cytoplasm. Functionally, may play role in the regulation of alternative splicing. May have hydrolase activity. The polypeptide is Cotranscriptional regulator ARB2A homolog (arb2a) (Xenopus tropicalis (Western clawed frog)).